The primary structure comprises 432 residues: Trigger factor (432 aa).

A PPIase FKBP-type domain is found at 161–246 (EDRVTIDFTG…LKKVEERELP (86 aa)).

Belongs to the FKBP-type PPIase family. Tig subfamily. Homodimer and monomer. In vivo most of the ribosomes are in complex with monomeric TF. Uncomplexed TF, however, is in a monomer-dimer equilibrium with approximately two thirds of TF existing in a dimeric state.

The protein localises to the cytoplasm. It catalyses the reaction [protein]-peptidylproline (omega=180) = [protein]-peptidylproline (omega=0). Its function is as follows. Involved in protein export. Acts as a chaperone by maintaining the newly synthesized protein in an open conformation. Functions as a peptidyl-prolyl cis-trans isomerase. The chain is Trigger factor from Shigella boydii serotype 4 (strain Sb227).